We begin with the raw amino-acid sequence, 156 residues long: Small ribosomal subunit protein uS7 (156 aa).

Belongs to the universal ribosomal protein uS7 family. In terms of assembly, part of the 30S ribosomal subunit. Contacts proteins S9 and S11.

In terms of biological role, one of the primary rRNA binding proteins, it binds directly to 16S rRNA where it nucleates assembly of the head domain of the 30S subunit. Is located at the subunit interface close to the decoding center, probably blocks exit of the E-site tRNA. The sequence is that of Small ribosomal subunit protein uS7 from Thermoanaerobacter sp. (strain X514).